The sequence spans 432 residues: 3-phosphoshikimate 1-carboxyvinyltransferase (432 aa).

Residues Lys23, Ser24, and Arg28 each coordinate 3-phosphoshikimate. A phosphoenolpyruvate-binding site is contributed by Lys23. Residues Gly95 and Arg123 each contribute to the phosphoenolpyruvate site. Residues Ser166, Gln168, Asp315, and Lys342 each contribute to the 3-phosphoshikimate site. Gln168 contacts phosphoenolpyruvate. Asp315 (proton acceptor) is an active-site residue. Phosphoenolpyruvate is bound by residues Arg346 and Arg390.

The protein belongs to the EPSP synthase family. As to quaternary structure, monomer.

The protein localises to the cytoplasm. The enzyme catalyses 3-phosphoshikimate + phosphoenolpyruvate = 5-O-(1-carboxyvinyl)-3-phosphoshikimate + phosphate. Its pathway is metabolic intermediate biosynthesis; chorismate biosynthesis; chorismate from D-erythrose 4-phosphate and phosphoenolpyruvate: step 6/7. In terms of biological role, catalyzes the transfer of the enolpyruvyl moiety of phosphoenolpyruvate (PEP) to the 5-hydroxyl of shikimate-3-phosphate (S3P) to produce enolpyruvyl shikimate-3-phosphate and inorganic phosphate. The sequence is that of 3-phosphoshikimate 1-carboxyvinyltransferase from Lactiplantibacillus plantarum (strain ATCC BAA-793 / NCIMB 8826 / WCFS1) (Lactobacillus plantarum).